Here is a 210-residue protein sequence, read N- to C-terminus: FMN-dependent NADH:quinone oxidoreductase (210 aa).

FMN contacts are provided by residues 17 to 19 (SRS), 102 to 105 (MWNL), and 148 to 151 (SCGG).

Belongs to the azoreductase type 1 family. Homodimer. Requires FMN as cofactor.

It carries out the reaction 2 a quinone + NADH + H(+) = 2 a 1,4-benzosemiquinone + NAD(+). It catalyses the reaction N,N-dimethyl-1,4-phenylenediamine + anthranilate + 2 NAD(+) = 2-(4-dimethylaminophenyl)diazenylbenzoate + 2 NADH + 2 H(+). In terms of biological role, quinone reductase that provides resistance to thiol-specific stress caused by electrophilic quinones. Functionally, also exhibits azoreductase activity. Catalyzes the reductive cleavage of the azo bond in aromatic azo compounds to the corresponding amines. This is FMN-dependent NADH:quinone oxidoreductase from Trichlorobacter lovleyi (strain ATCC BAA-1151 / DSM 17278 / SZ) (Geobacter lovleyi).